The sequence spans 1464 residues: DNA polymerase III PolC-type (1464 aa).

The region spanning 426–582 (YVVFDVETTG…YDAEATGRLL (157 aa)) is the Exonuclease domain.

This sequence belongs to the DNA polymerase type-C family. PolC subfamily.

It is found in the cytoplasm. It carries out the reaction DNA(n) + a 2'-deoxyribonucleoside 5'-triphosphate = DNA(n+1) + diphosphate. In terms of biological role, required for replicative DNA synthesis. This DNA polymerase also exhibits 3' to 5' exonuclease activity. The sequence is that of DNA polymerase III PolC-type from Streptococcus thermophilus (strain ATCC BAA-491 / LMD-9).